We begin with the raw amino-acid sequence, 310 residues long: Isoflavone reductase homolog A622 (310 aa).

Residues 13–19, Arg-38, and Lys-47 contribute to the NADP(+) site; that span reads GGTGYIG. The Proton acceptor role is filled by Lys-135. Arg-139 serves as a coordination point for NADP(+).

This sequence belongs to the NmrA-type oxidoreductase family. Isoflavone reductase subfamily. As to quaternary structure, monomer.

Its subcellular location is the cytoplasm. It participates in alkaloid biosynthesis; nicotine biosynthesis. Functionally, NADPH-binding protein. Involved in the biosynthesis of pyridine alkaloid natural products, leading mainly to the production of anabasine, anatabine, nicotine and nornicotine, effective deterrents against herbivores with antiparasitic and pesticide properties (neurotoxins); nornicotine serves as the precursor in the synthesis of the carcinogen compound N'-nitrosonornicotine (NNN). Reductase involved in a late step of tobacco alkaloid biosynthesis. Triggers either the formation of a nicotinic acid-derived precursor or the final condensation reaction of tobacco alkaloids. The chain is Isoflavone reductase homolog A622 from Nicotiana glauca (Glaucous tobacco).